A 423-amino-acid polypeptide reads, in one-letter code: Ribosome biogenesis protein WDR12 homolog (423 aa).

The tract at residues 10 to 93 (VQVHLKTKQE…EDAIEIEYVE (84 aa)) is ubiquitin-like (UBL) domain. 7 WD repeats span residues 105-142 (LHDD…ILTI), 144-186 (GHTA…NAVE), 193-232 (GHER…AGGD), 253-291 (GHRE…IKTE), 293-332 (STNK…GSIV), 338-378 (GHNA…APLY), and 382-420 (GHGE…VETM).

Belongs to the WD repeat WDR12/YTM1 family.

The protein localises to the nucleus. It is found in the nucleolus. It localises to the nucleoplasm. In terms of biological role, required for maturation of ribosomal RNAs and formation of the large ribosomal subunit. This Drosophila willistoni (Fruit fly) protein is Ribosome biogenesis protein WDR12 homolog.